Consider the following 335-residue polypeptide: Avermitilol synthase (335 aa).

Residues Asp80, Asp84, Asn219, Ser223, and Glu227 each contribute to the Mg(2+) site. The DDXXD motif signature appears at 80–84; sequence DDQFD.

It belongs to the terpene synthase family. Requires Mg(2+) as cofactor.

The enzyme catalyses (2E,6E)-farnesyl diphosphate + H2O = avermitilol + diphosphate. Its function is as follows. Catalyzes the cyclization of farnesyl diphosphate to avermitilol. This chain is Avermitilol synthase (tpc1), found in Streptomyces avermitilis (strain ATCC 31267 / DSM 46492 / JCM 5070 / NBRC 14893 / NCIMB 12804 / NRRL 8165 / MA-4680).